A 151-amino-acid chain; its full sequence is Aspartate carbamoyltransferase regulatory chain (151 aa).

Residues Cys-107, Cys-112, Cys-135, and Cys-138 each coordinate Zn(2+).

The protein belongs to the PyrI family. As to quaternary structure, contains catalytic and regulatory chains. The cofactor is Zn(2+).

In terms of biological role, involved in allosteric regulation of aspartate carbamoyltransferase. The protein is Aspartate carbamoyltransferase regulatory chain of Thermococcus onnurineus (strain NA1).